Reading from the N-terminus, the 427-residue chain is Trigger factor (427 aa).

The PPIase FKBP-type domain maps to 163–248; the sequence is GDIVVIDFAG…LKEIKRKELA (86 aa).

It belongs to the FKBP-type PPIase family. Tig subfamily.

The protein localises to the cytoplasm. The catalysed reaction is [protein]-peptidylproline (omega=180) = [protein]-peptidylproline (omega=0). In terms of biological role, involved in protein export. Acts as a chaperone by maintaining the newly synthesized protein in an open conformation. Functions as a peptidyl-prolyl cis-trans isomerase. The chain is Trigger factor from Carboxydothermus hydrogenoformans (strain ATCC BAA-161 / DSM 6008 / Z-2901).